A 249-amino-acid polypeptide reads, in one-letter code: Proteasome subunit alpha type-3 (249 aa).

Ser-2 is modified (N-acetylserine). O-acetylserine is present on residues Ser-214 and Ser-220. Lys-221 is covalently cross-linked (Glycyl lysine isopeptide (Lys-Gly) (interchain with G-Cter in ubiquitin)).

This sequence belongs to the peptidase T1A family. As to quaternary structure, component of the 20S core complex of the 26S proteasome. The 26S proteasome is composed of a core protease (CP), known as the 20S proteasome, capped at one or both ends by the 19S regulatory particle (RP/PA700). The 20S proteasome core is composed of 28 subunits that are arranged in four stacked rings, resulting in a barrel-shaped structure. The two end rings are each formed by seven alpha subunits, and the two central rings are each formed by seven beta subunits. The catalytic chamber with the active sites is on the inside of the barrel. As to expression, ubiquitous low levels.

It is found in the cytoplasm. It localises to the nucleus. In terms of biological role, the proteasome is a multicatalytic proteinase complex which is characterized by its ability to cleave peptides with Arg, Phe, Tyr, Leu, and Glu adjacent to the leaving group at neutral or slightly basic pH. The proteasome has an ATP-dependent proteolytic activity. The polypeptide is Proteasome subunit alpha type-3 (PAG1) (Arabidopsis thaliana (Mouse-ear cress)).